We begin with the raw amino-acid sequence, 74 residues long: MKTGMIICLLLIAFMDADGSPGDTLYSQKTADTDSGMKRFQKTFQKRRCVFCPKEPCCDGDQCMTAPGTGPFCG.

The signal sequence occupies residues 1 to 19 (MKTGMIICLLLIAFMDADG). Positions 20–47 (SPGDTLYSQKTADTDSGMKRFQKTFQKR) are excised as a propeptide. 3 disulfides stabilise this stretch: Cys49-Cys58, Cys52-Cys63, and Cys57-Cys73.

As to expression, expressed by the venom duct.

The protein resides in the secreted. Its function is as follows. Probable neurotoxin. The chain is Conotoxin Im6.10 from Conus imperialis (Imperial cone).